A 541-amino-acid polypeptide reads, in one-letter code: Tegument protein UL21 homolog (541 aa).

The protein belongs to the alphaherpesvirinae UL21 protein family. In terms of assembly, interacts (via C-terminus) with UL16.

It is found in the virion tegument. It localises to the host cytoplasm. The protein localises to the host nucleus. May participate in DNA packaging/capsid maturation events. Promotes efficient incorporation of tegument proteins UL46, UL49, and US3 homologs into virions. May also play a role in capsid transport to the trans-Golgi network (TGN). This is Tegument protein UL21 homolog from Homo sapiens (Human).